A 1023-amino-acid chain; its full sequence is Probable histidine kinase 3 (1023 aa).

The Cytoplasmic portion of the chain corresponds to 1 to 80 (MDEMSCGGGG…RGWRVVRETW (80 aa)). A helical transmembrane segment spans residues 81–101 (WWVLLLWILAGSLGSFYLFLF). Topologically, residues 102–387 (MNAQSLDKRR…CRFEKKPPWP (286 aa)) are extracellular. The CHASE domain occupies 151-352 (TPSAIDQMTF…TNESPISMYG (202 aa)). Residues 388–408 (WLAITSSFGTLVIALLTGHIF) traverse the membrane as a helical segment. Topologically, residues 409-1023 (QATVHRIAKV…RFFQNHDQVE (615 aa)) are cytoplasmic. The Histidine kinase domain maps to 445 to 715 (TVSHEIRTPM…TFTFTAVLMR (271 aa)). Histidine 448 carries the phosphohistidine; by autocatalysis modification. Response regulatory domains lie at 732–854 (NALV…RRAL) and 880–1016 (QIIV…ARFF). The residue at position 783 (aspartate 783) is a 4-aspartylphosphate. Positions 812-831 (LFLLGSSASSPKGGSDTSRE) are disordered. The segment covering 817–827 (SSASSPKGGSD) has biased composition (polar residues). 4-aspartylphosphate is present on aspartate 930.

In terms of processing, activation probably requires a transfer of a phosphate group between a His in the transmitter domain and an Asp of the receiver domain.

It localises to the cell membrane. It carries out the reaction ATP + protein L-histidine = ADP + protein N-phospho-L-histidine.. In terms of biological role, cytokinin receptor related to bacterial two-component regulators. Functions as a histidine kinase and transmits the stress signal to a downstream MAPK cascade. The polypeptide is Probable histidine kinase 3 (Oryza sativa subsp. indica (Rice)).